A 74-amino-acid polypeptide reads, in one-letter code: MGKEDVIRMEGTIIEALPNAMFRVELDNGHKVLAHVSGRMRKNFIRLVPGDRVIVELSVYDLTRGRIVYRKKPE.

One can recognise an S1-like domain in the interval 1-72 (MGKEDVIRME…TRGRIVYRKK (72 aa)).

Belongs to the IF-1 family. As to quaternary structure, component of the 30S ribosomal translation pre-initiation complex which assembles on the 30S ribosome in the order IF-2 and IF-3, IF-1 and N-formylmethionyl-tRNA(fMet); mRNA recruitment can occur at any time during PIC assembly.

It is found in the cytoplasm. One of the essential components for the initiation of protein synthesis. Stabilizes the binding of IF-2 and IF-3 on the 30S subunit to which N-formylmethionyl-tRNA(fMet) subsequently binds. Helps modulate mRNA selection, yielding the 30S pre-initiation complex (PIC). Upon addition of the 50S ribosomal subunit IF-1, IF-2 and IF-3 are released leaving the mature 70S translation initiation complex. The polypeptide is Translation initiation factor IF-1 (Thermotoga petrophila (strain ATCC BAA-488 / DSM 13995 / JCM 10881 / RKU-1)).